The sequence spans 691 residues: Pentatricopeptide repeat-containing protein At4g37170 (691 aa).

PPR repeat units lie at residues 84–118 (PAST…GFVP), 119–149 (GIVI…MPNR), 150–184 (DLCS…DSYS), 185–211 (WTAM…MQRV), 217–251 (NIFT…GLDS), 252–286 (DEVL…DVVS), 287–317 (WTSM…CERP), 318–352 (NEYT…GFDP), 353–383 (YSFA…CPKP), 384–418 (DLVS…GTKP), 419–449 (DHVT…ITEK), and 455–485 (TSDH…MPMK). A type E motif region spans residues 490–565 (LWASVLGGCS…RPGSSWTEIK (76 aa)). The interval 566–596 (RKRHVFIAADTSHPMYNQIVEFLRELRKKMK) is type E(+) motif. Residues 597–691 (EEGYVPATSL…NGQCSCGDYW (95 aa)) are type DYW motif.

This sequence belongs to the PPR family. PCMP-H subfamily.

This is Pentatricopeptide repeat-containing protein At4g37170 (PCMP-H5) from Arabidopsis thaliana (Mouse-ear cress).